A 73-amino-acid chain; its full sequence is UPF0235 protein PERMA_1406 (73 aa).

This sequence belongs to the UPF0235 family.

This chain is UPF0235 protein PERMA_1406, found in Persephonella marina (strain DSM 14350 / EX-H1).